The following is a 91-amino-acid chain: Protein LURE 1.3 (91 aa).

The first 20 residues, 1–20 (MKLPFIFLITLLIFVSSCTS), serve as a signal peptide directing secretion. N-linked (GlcNAc...) asparagine glycosylation is present at Asn-24. 3 disulfide bridges follow: Cys-59–Cys-76, Cys-62–Cys-83, and Cys-66–Cys-85. Residues 68-88 (RRGKYIRTCSFERKLCRCSIS) are PRK6 binding.

It belongs to the DEFL family. In terms of assembly, binds to PRK6 LRRs. As to expression, expressed in the pistil. Detected exclusively in the synergid cells.

Its subcellular location is the secreted. Its function is as follows. Pollen tube attractants guiding pollen tubes to the ovular micropyle. Attracts pollen tubes from both A.thaliana and A.lyrata. The protein is Protein LURE 1.3 of Arabidopsis thaliana (Mouse-ear cress).